A 390-amino-acid polypeptide reads, in one-letter code: DNA polymerase IV (390 aa).

A UmuC domain is found at 6-187 (VMHVDLDAFF…LDIAVMPGIG (182 aa)). Residues aspartate 10 and aspartate 105 each contribute to the Mg(2+) site. Residue glutamate 106 is part of the active site.

The protein belongs to the DNA polymerase type-Y family. As to quaternary structure, monomer. It depends on Mg(2+) as a cofactor.

It localises to the cytoplasm. It catalyses the reaction DNA(n) + a 2'-deoxyribonucleoside 5'-triphosphate = DNA(n+1) + diphosphate. Poorly processive, error-prone DNA polymerase involved in untargeted mutagenesis. Copies undamaged DNA at stalled replication forks, which arise in vivo from mismatched or misaligned primer ends. These misaligned primers can be extended by PolIV. Exhibits no 3'-5' exonuclease (proofreading) activity. May be involved in translesional synthesis, in conjunction with the beta clamp from PolIII. The protein is DNA polymerase IV of Dehalococcoides mccartyi (strain ATCC BAA-2100 / JCM 16839 / KCTC 5957 / BAV1).